The primary structure comprises 111 residues: DIVLTQSPASLAVSLGQRATISCRASESVDNSGISFMNWFQQKPGQPPKLLIYAASNQGSGVPARFSGSGSGTDFSLNIHPMEEDDTAMYFCQQSKEVPWTFGGGTKLEIK.

Residues 1 to 23 (DIVLTQSPASLAVSLGQRATISC) are framework-1. An intrachain disulfide couples Cys-23 to Cys-92. Positions 24-38 (RASESVDNSGISFMN) are complementarity-determining-1. The segment at 39 to 53 (WFQQKPGQPPKLLIY) is framework-2. A complementarity-determining-2 region spans residues 54–60 (AASNQGS). A framework-3 region spans residues 61 to 92 (GVPARFSGSGSGTDFSLNIHPMEEDDTAMYFC). The complementarity-determining-3 stretch occupies residues 93 to 101 (QQSKEVPWT). Positions 102–111 (FGGGTKLEIK) are framework-4.

The protein is Ig kappa chain V-III region MOPC 70 of Mus musculus (Mouse).